Consider the following 208-residue polypeptide: MARYTGASCRLCRREGEKLYLKGERCTTNKCAIARRGYAPGQHGQNKKKLSEYGLQLREKQKARRYYGILEGQFRRYFEMAVKKKGITGENLLQILESRLDNVVYRMGLAVSRREARQLVRHGHFTVNGKRVDIPSYLVKVGDVIAVKEKSKSSPKMQSNKEYAAGRPRPKWLEYDAEEMSGKVVALPAREDIDLPIRENLIVELYSK.

The region spanning 98–178 is the S4 RNA-binding domain; it reads SRLDNVVYRM…RPKWLEYDAE (81 aa).

The protein belongs to the universal ribosomal protein uS4 family. Part of the 30S ribosomal subunit. Contacts protein S5. The interaction surface between S4 and S5 is involved in control of translational fidelity.

Its function is as follows. One of the primary rRNA binding proteins, it binds directly to 16S rRNA where it nucleates assembly of the body of the 30S subunit. With S5 and S12 plays an important role in translational accuracy. The sequence is that of Small ribosomal subunit protein uS4 from Acetivibrio thermocellus (strain ATCC 27405 / DSM 1237 / JCM 9322 / NBRC 103400 / NCIMB 10682 / NRRL B-4536 / VPI 7372) (Clostridium thermocellum).